Reading from the N-terminus, the 142-residue chain is Hemoglobin subunit zeta (142 aa).

Position 2 is an N-acetylserine (Ser-2). A Globin domain is found at Ser-2–Arg-142. Thr-29 is modified (phosphothreonine). The residue at position 53 (Ser-53) is a Phosphoserine. His-59 is a binding site for heme b. Residue Ser-73 is modified to Phosphoserine. Heme b is bound at residue His-88.

This sequence belongs to the globin family. Heterotetramer of two zeta chains and beta-type chains.

The zeta chain is an alpha-type chain of mammalian embryonic hemoglobin. The chain is Hemoglobin subunit zeta (Hbz) from Mus musculus (Mouse).